The following is a 288-amino-acid chain: Hypersensitive-induced response protein-like protein 1 (288 aa).

Glycine 2 is lipidated: N-myristoyl glycine.

Its function is as follows. Positive regulator of hypersensitive response (HR)-like cell death. May be involved in potassium ion channel regulation. The protein is Hypersensitive-induced response protein-like protein 1 of Oryza sativa subsp. japonica (Rice).